The following is a 243-amino-acid chain: Clathrin light chain A (243 aa).

Residue M1 is modified to Blocked amino end (Met). Disordered regions lie at residues 1–22 (MAELDPFGVPAGGPALGNGVAG) and 49–87 (ILDGGAPGSQPHGEPPGIPDAVDGVTNGDYYQESNGPTD). Gly residues predominate over residues 10–20 (PAGGPALGNGV). The interval 95 to 157 (VDRLQSEPES…QLQKTKANNR (63 aa)) is involved in binding clathrin heavy chain. Residues S100 and S201 each carry the phosphoserine modification. K218 bears the N6-acetyllysine mark. A Phosphoserine modification is found at S231. K237 carries the N6-acetyllysine modification.

The protein belongs to the clathrin light chain family. As to quaternary structure, clathrin coats are formed from molecules containing 3 heavy chains and 3 light chains. Interacts with CALY; the interaction stimulates clathrin self-assembly and clathrin-mediated endocytosis. Interacts with CKAP5 and TACC3 forming the TACC3/ch-TOG/clathrin complex located at spindle inter-microtubules bridges; the complex implicates clathrin triskelions.

Its subcellular location is the cytoplasmic vesicle membrane. The protein resides in the membrane. It localises to the coated pit. The protein localises to the cytoplasm. It is found in the cytoskeleton. Its subcellular location is the spindle. Clathrin is the major protein of the polyhedral coat of coated pits and vesicles. Acts as a component of the TACC3/ch-TOG/clathrin complex proposed to contribute to stabilization of kinetochore fibers of the mitotic spindle by acting as inter-microtubule bridge. This is Clathrin light chain A (CLTA) from Bos taurus (Bovine).